Reading from the N-terminus, the 198-residue chain is Paired-like homeodomain transcription factor LEUTX (198 aa).

A DNA-binding region (homeobox) is located at residues Pro-33–Gln-67. The segment at Arg-65 to Val-133 is disordered. The tract at residues Pro-79–Glu-190 is LEUTX region. Residues Ala-110–Ser-119 show a composition bias toward basic and acidic residues. 4 consecutive short sequence motifs (9aaTAD) follow at residues Gly-125 to Trp-136, Pro-153 to Glu-161, Asp-163 to Leu-171, and Ser-178 to Pro-186.

Belongs to the paired homeobox family.

The protein resides in the nucleus. Functionally, paired-like homeobox transcription factor involved in embryogenesis. May act as a regulator of embryo genome activation. Binds to a 36 bp DNA elements containing a 5'-TAATCC-3' sequence motif, referred to as EEA motif (EGA-enriched Alu-motif), present in the promoters of target genes activated in early embryos. Inactive transcriptional activity. In Homo sapiens (Human), this protein is Paired-like homeodomain transcription factor LEUTX.